The sequence spans 193 residues: dTTP/UTP pyrophosphatase (193 aa).

Catalysis depends on aspartate 71, which acts as the Proton acceptor.

Belongs to the Maf family. YhdE subfamily. The cofactor is a divalent metal cation.

The protein resides in the cytoplasm. The catalysed reaction is dTTP + H2O = dTMP + diphosphate + H(+). The enzyme catalyses UTP + H2O = UMP + diphosphate + H(+). Functionally, nucleoside triphosphate pyrophosphatase that hydrolyzes dTTP and UTP. May have a dual role in cell division arrest and in preventing the incorporation of modified nucleotides into cellular nucleic acids. The polypeptide is dTTP/UTP pyrophosphatase (Geobacter sp. (strain M21)).